A 225-amino-acid chain; its full sequence is Ferric nitrobindin-like protein (225 aa).

Positions Gly-78–Gly-84 match the GXWXGXG motif.

The protein belongs to the nitrobindin family.

This chain is Ferric nitrobindin-like protein, found in Corynebacterium diphtheriae (strain ATCC 700971 / NCTC 13129 / Biotype gravis).